Consider the following 236-residue polypeptide: Methylosome subunit pICln (236 aa).

Residue S2 is modified to N-acetylserine. Phosphoserine is present on residues S95, S143, S192, S194, S197, and S209. Residues 134–158 (LHPDPEDEDSDDYDGEEYDVEAHEQ) are disordered. The segment covering 138-152 (PEDEDSDDYDGEEYD) has biased composition (acidic residues). T222 bears the Phosphothreonine mark.

Belongs to the pICln (TC 1.A.47) family. As to quaternary structure, component of the methylosome, a 20S complex containing at least PRMT5/SKB1, WDR77/MEP50 and CLNS1A/pICln. May mediate SNRPD1 and SNRPD3 methylation. Forms a 6S pICln-Sm complex composed of CLNS1A/pICln, SNRPD1, SNRPD2, SNRPE, SNRPF and SNRPG; ring-like structure where CLNS1A/pICln mimics additional Sm proteins and which is unable to assemble into the core snRNP. Interacts with LSM10 and LSM11. Expressed in most tissues.

Its subcellular location is the cytoplasm. It is found in the cytosol. The protein resides in the nucleus. The protein localises to the cytoskeleton. Involved in both the assembly of spliceosomal snRNPs and the methylation of Sm proteins. Chaperone that regulates the assembly of spliceosomal U1, U2, U4 and U5 small nuclear ribonucleoproteins (snRNPs), the building blocks of the spliceosome, and thereby plays an important role in the splicing of cellular pre-mRNAs. Most spliceosomal snRNPs contain a common set of Sm proteins SNRPB, SNRPD1, SNRPD2, SNRPD3, SNRPE, SNRPF and SNRPG that assemble in a heptameric protein ring on the Sm site of the small nuclear RNA to form the core snRNP (Sm core). In the cytosol, the Sm proteins SNRPD1, SNRPD2, SNRPE, SNRPF and SNRPG are trapped in an inactive 6S pICln-Sm complex by the chaperone CLNS1A that controls the assembly of the core snRNP. Dissociation by the SMN complex of CLNS1A from the trapped Sm proteins and their transfer to an SMN-Sm complex triggers the assembly of core snRNPs and their transport to the nucleus. This is Methylosome subunit pICln (Clns1a) from Rattus norvegicus (Rat).